A 229-amino-acid chain; its full sequence is MIRAIVTDIEGTTSDIRFVHNVLFPYARERLAAFVTAQQYAEPVKSILDNLRDEIAAPHATIGELVDALFTFMDEDRKSTALKALQGIIWQDGYVNGDFTGQLYPDVLPALEKWKAQGIDLYVYSSGSVAAQKLLFGYSDEGDITHLFSGYFDTRVGAKRDVQSYQNIAAQIGVSPSQILFLSDIHEELDAAEQAGFRTLQLIRGDDDGASHHHQVHQFDEINPEQIPS.

The protein belongs to the HAD-like hydrolase superfamily. MasA/MtnC family. As to quaternary structure, monomer. It depends on Mg(2+) as a cofactor.

It carries out the reaction 5-methylsulfanyl-2,3-dioxopentyl phosphate + H2O = 1,2-dihydroxy-5-(methylsulfanyl)pent-1-en-3-one + phosphate. The protein operates within amino-acid biosynthesis; L-methionine biosynthesis via salvage pathway; L-methionine from S-methyl-5-thio-alpha-D-ribose 1-phosphate: step 3/6. It participates in amino-acid biosynthesis; L-methionine biosynthesis via salvage pathway; L-methionine from S-methyl-5-thio-alpha-D-ribose 1-phosphate: step 4/6. Functionally, bifunctional enzyme that catalyzes the enolization of 2,3-diketo-5-methylthiopentyl-1-phosphate (DK-MTP-1-P) into the intermediate 2-hydroxy-3-keto-5-methylthiopentenyl-1-phosphate (HK-MTPenyl-1-P), which is then dephosphorylated to form the acireductone 1,2-dihydroxy-3-keto-5-methylthiopentene (DHK-MTPene). This is Enolase-phosphatase E1 from Enterobacter sp. (strain 638).